Reading from the N-terminus, the 241-residue chain is ATP synthase subunit a (241 aa).

5 helical membrane passes run G30 to G50, L89 to I109, I128 to S148, L193 to L213, and G214 to G234.

This sequence belongs to the ATPase A chain family. F-type ATPases have 2 components, CF(1) - the catalytic core - and CF(0) - the membrane proton channel. CF(1) has five subunits: alpha(3), beta(3), gamma(1), delta(1), epsilon(1). CF(0) has four main subunits: a, b, b' and c.

It localises to the cellular thylakoid membrane. In terms of biological role, key component of the proton channel; it plays a direct role in the translocation of protons across the membrane. The protein is ATP synthase subunit a of Synechococcus sp. (strain CC9605).